The following is a 150-amino-acid chain: 6,7-dimethyl-8-ribityllumazine synthase (150 aa).

5-amino-6-(D-ribitylamino)uracil is bound by residues Phe11, 43–45, and 67–69; these read VYD and AVI. 72-73 lines the (2S)-2-hydroxy-3-oxobutyl phosphate pocket; it reads AT. His75 serves as the catalytic Proton donor. Residue Leu100 participates in 5-amino-6-(D-ribitylamino)uracil binding. Arg115 contributes to the (2S)-2-hydroxy-3-oxobutyl phosphate binding site.

The protein belongs to the DMRL synthase family.

It catalyses the reaction (2S)-2-hydroxy-3-oxobutyl phosphate + 5-amino-6-(D-ribitylamino)uracil = 6,7-dimethyl-8-(1-D-ribityl)lumazine + phosphate + 2 H2O + H(+). It functions in the pathway cofactor biosynthesis; riboflavin biosynthesis; riboflavin from 2-hydroxy-3-oxobutyl phosphate and 5-amino-6-(D-ribitylamino)uracil: step 1/2. Its function is as follows. Catalyzes the formation of 6,7-dimethyl-8-ribityllumazine by condensation of 5-amino-6-(D-ribitylamino)uracil with 3,4-dihydroxy-2-butanone 4-phosphate. This is the penultimate step in the biosynthesis of riboflavin. This Pyrobaculum arsenaticum (strain DSM 13514 / JCM 11321 / PZ6) protein is 6,7-dimethyl-8-ribityllumazine synthase.